Consider the following 492-residue polypeptide: Cysteine--tRNA ligase (492 aa).

Cysteine 27 contributes to the Zn(2+) binding site. The short motif at 29–39 (VTVYDLCHLGH) is the 'HIGH' region element. Residues cysteine 211, histidine 236, and glutamate 240 each contribute to the Zn(2+) site. Positions 268–272 (KMSKS) match the 'KMSKS' region motif. ATP is bound at residue lysine 271.

This sequence belongs to the class-I aminoacyl-tRNA synthetase family. In terms of assembly, monomer. Zn(2+) is required as a cofactor.

It localises to the cytoplasm. It catalyses the reaction tRNA(Cys) + L-cysteine + ATP = L-cysteinyl-tRNA(Cys) + AMP + diphosphate. This is Cysteine--tRNA ligase from Prochlorococcus marinus (strain MIT 9515).